The primary structure comprises 288 residues: uncharacterized protein (288 aa).

Residues 1–12 (MTEGRCAQHPDG) are compositionally biased toward basic and acidic residues. The disordered stretch occupies residues 1–20 (MTEGRCAQHPDGLDVQDVCD).

The protein belongs to the class IV-like SAM-binding methyltransferase superfamily. RNA methyltransferase TrmH family.

This is an uncharacterized protein from Mycobacterium tuberculosis (strain ATCC 25618 / H37Rv).